Reading from the N-terminus, the 724-residue chain is Small conductance calcium-activated potassium channel protein 3 (724 aa).

Positions 1 to 11 (MDTSGHFHDSG) are enriched in basic and acidic residues. Disordered regions lie at residues 1–161 (MDTS…RDSN) and 232–251 (ATHN…FPKA). The segment covering 34–58 (QPPPPPPPPAPPAAPQQPPGPPLQP) has biased composition (pro residues). The span at 59 to 88 (QPLQLQQQQQQQQQQPPHPLSQLAQLQSQP) shows a compositional bias: low complexity. Residues 105-125 (PSSNSTAILHPSSRQGSQLNL) are compositionally biased toward polar residues. The segment covering 131-140 (GHSPSSTATS) has biased composition (low complexity). The residue at position 160 (S160) is a Phosphoserine. Residues 232 to 249 (ATHNHQHAGTTASSTTFP) show a composition bias toward polar residues. Residues 281 to 301 (LIFGMFGIVVMVIETELSWGL) traverse the membrane as a helical segment. A helical transmembrane segment spans residues 308–328 (FSLALKCLISLSTIILLGLII). A helical membrane pass occupies residues 359-379 (ISLEMLVCAIHPIPGEYKFFW). Residues 398-418 (IILSIPMFLRLYLIARVMLLH) form a helical membrane-spanning segment. Residues 447–467 (LMTICPGTVLLVFSISLWIIA) traverse the membrane as a helical segment. Positions 487–507 (FLGAMWLISITFLSIGYGDMV) form an intramembrane region, pore-forming. Residues 516 to 536 (VCLLTGIMGAGCTALVVAVVA) traverse the membrane as a helical segment. The segment at 554-630 (DTQLTKRIKN…LVDLSKMQNV (77 aa)) is calmodulin-binding. The stretch at 635 to 662 (ITELNDRSEDLEKQIGSLESKLEHLTAS) forms a coiled coil. Residues 702-724 (LSDSPIGVSSTSFPTPYTSSSSC) form a disordered region. A compositionally biased stretch (low complexity) spans 710–724 (SSTSFPTPYTSSSSC).

This sequence belongs to the potassium channel KCNN family. KCa2.3/KCNN3 subfamily. Homodimer. Heteromultimer with KCNN2 or KCNN1; this modulates plasma membrane expression and consequently the small conductance calcium-activated potassium channel activity. The complex is composed of 4 channel subunits each of which binds to a calmodulin subunit which regulates the channel activity through calcium-binding. Interacts with CALM1.

The protein resides in the cell membrane. The protein localises to the cytoplasm. It is found in the myofibril. Its subcellular location is the sarcomere. It localises to the z line. It carries out the reaction K(+)(in) = K(+)(out). Inhibited by bee venom neurotoxin apamin. Functionally, small conductance calcium-activated potassium channel that mediates the voltage-independent transmembrane transfer of potassium across the cell membrane through a constitutive interaction with calmodulin which binds the intracellular calcium allowing its opening. The current is characterized by a voltage-independent activation, an intracellular calcium concentration increase-dependent activation and a single-channel conductance of 10 picosiemens. Also presents an inwardly rectifying current, thus reducing its already small outward conductance of potassium ions, which is particularly the case when the membrane potential displays positive values, above + 20 mV. Activation is followed by membrane hyperpolarization. Thought to regulate neuronal excitability by contributing to the slow component of synaptic afterhyperpolarization. In Sus scrofa (Pig), this protein is Small conductance calcium-activated potassium channel protein 3.